Here is a 502-residue protein sequence, read N- to C-terminus: Probable glycine dehydrogenase (decarboxylating) subunit 2 (502 aa).

At lysine 273 the chain carries N6-(pyridoxal phosphate)lysine.

It belongs to the GcvP family. C-terminal subunit subfamily. In terms of assembly, the glycine cleavage system is composed of four proteins: P, T, L and H. In this organism, the P 'protein' is a heterodimer of two subunits. The cofactor is pyridoxal 5'-phosphate.

It catalyses the reaction N(6)-[(R)-lipoyl]-L-lysyl-[glycine-cleavage complex H protein] + glycine + H(+) = N(6)-[(R)-S(8)-aminomethyldihydrolipoyl]-L-lysyl-[glycine-cleavage complex H protein] + CO2. In terms of biological role, the glycine cleavage system catalyzes the degradation of glycine. The P protein binds the alpha-amino group of glycine through its pyridoxal phosphate cofactor; CO(2) is released and the remaining methylamine moiety is then transferred to the lipoamide cofactor of the H protein. This chain is Probable glycine dehydrogenase (decarboxylating) subunit 2, found in Pyrococcus abyssi (strain GE5 / Orsay).